The chain runs to 200 residues: Probable E3 ubiquitin-protein ligase ATL45 (200 aa).

A helical membrane pass occupies residues M26–V46. An RING-type; atypical zinc finger spans residues C113–R155.

Belongs to the RING-type zinc finger family. ATL subfamily. In terms of assembly, interacts with BIK1.

The protein resides in the membrane. The enzyme catalyses S-ubiquitinyl-[E2 ubiquitin-conjugating enzyme]-L-cysteine + [acceptor protein]-L-lysine = [E2 ubiquitin-conjugating enzyme]-L-cysteine + N(6)-ubiquitinyl-[acceptor protein]-L-lysine.. It participates in protein modification; protein ubiquitination. E3 ubiquitin-protein ligase that possess E3 ubiquitin ligase activity in vitro and mediates protein monoubiquitination. Triggers the monoubiquitination of phosphorylated BIK1 in response to pathogen-associated molecular pattern (PAMP) detection. May be involved in the early steps of the plant defense signaling pathway. This is Probable E3 ubiquitin-protein ligase ATL45 from Arabidopsis thaliana (Mouse-ear cress).